The following is a 517-amino-acid chain: Bifunctional purine biosynthesis protein PurH (517 aa).

Residues 1-145 (MSPLALVSVS…KNHKDVSVLV (145 aa)) enclose the MGS-like domain.

It belongs to the PurH family.

It catalyses the reaction (6R)-10-formyltetrahydrofolate + 5-amino-1-(5-phospho-beta-D-ribosyl)imidazole-4-carboxamide = 5-formamido-1-(5-phospho-D-ribosyl)imidazole-4-carboxamide + (6S)-5,6,7,8-tetrahydrofolate. It carries out the reaction IMP + H2O = 5-formamido-1-(5-phospho-D-ribosyl)imidazole-4-carboxamide. The protein operates within purine metabolism; IMP biosynthesis via de novo pathway; 5-formamido-1-(5-phospho-D-ribosyl)imidazole-4-carboxamide from 5-amino-1-(5-phospho-D-ribosyl)imidazole-4-carboxamide (10-formyl THF route): step 1/1. Its pathway is purine metabolism; IMP biosynthesis via de novo pathway; IMP from 5-formamido-1-(5-phospho-D-ribosyl)imidazole-4-carboxamide: step 1/1. This Prochlorococcus marinus subsp. pastoris (strain CCMP1986 / NIES-2087 / MED4) protein is Bifunctional purine biosynthesis protein PurH.